The primary structure comprises 560 residues: Portal protein (560 aa).

The interval 526–560 is disordered; sequence KVQADETGNYSGSDVSPLKFKPETLPFSGSTDDSI.

The protein belongs to the Tevenvirinae portal protein family. Homododecamer. Interacts with the large terminase subunit. Interacts with the major capsid protein. Interacts with the capsid vertex protein.

The protein localises to the virion. In terms of biological role, forms the portal vertex of the capsid. This portal plays critical roles in head assembly, genome packaging, neck/tail attachment, and genome ejection. The portal protein multimerizes as a single ring-shaped homododecamer arranged around a central channel. Binds to the terminase subunits to form the packaging machine. This is Portal protein from Salmonella typhi.